A 191-amino-acid polypeptide reads, in one-letter code: Small ribosomal subunit protein uS5 (191 aa).

An S5 DRBM domain is found at 21–84 (FADRLVAINR…EQAKRQMIRV (64 aa)). The interval 155-191 (LRKESSPRSVAQRRGKKVADILPKVDAAPAPAETAEA) is disordered. Positions 181–191 (AAPAPAETAEA) are enriched in low complexity.

The protein belongs to the universal ribosomal protein uS5 family. In terms of assembly, part of the 30S ribosomal subunit. Contacts proteins S4 and S8.

Functionally, with S4 and S12 plays an important role in translational accuracy. In terms of biological role, located at the back of the 30S subunit body where it stabilizes the conformation of the head with respect to the body. The protein is Small ribosomal subunit protein uS5 of Roseobacter denitrificans (strain ATCC 33942 / OCh 114) (Erythrobacter sp. (strain OCh 114)).